A 468-amino-acid polypeptide reads, in one-letter code: H(+)/Cl(-) exchange transporter ClcA (468 aa).

The Cytoplasmic portion of the chain corresponds to 1 to 30 (MSTRETFKISLLAKMPKDVINQFLSKDKTP). The helical transmembrane segment at 31-67 (FSVLFLSLLVGILAGLVGTYFEQAVHLVSETRTDWLK) threads the bilayer. Over 68–74 (SEIGSFL) the chain is Periplasmic. The chain crosses the membrane as a helical span at residues 75–98 (PLWLAAFLISAFLAFIGYFLVHRF). The short motif at 104 to 108 (GSGIP) is the Selectivity filter part_1 element. A chloride-binding site is contributed by Ser-105. Residues 107–114 (IPEIEGAM) constitute an intramembrane region (helical). The Cytoplasmic portion of the chain corresponds to 115 to 121 (DGMRPVR). 2 helical membrane passes run 122–139 (WWRVLPVKFFGGMGALGS) and 146–164 (EGPTVQMGGAVGRMISDIF). The Selectivity filter part_2 motif lies at 144 to 148 (GREGP). At 165–174 (RVKNEDTRHS) the chain is on the cytoplasmic side. 2 consecutive intramembrane regions (helical) follow at residues 175–187 (LLAAGAAGGLAAA) and 191–199 (PLAGIMFVI). At 200-212 (EEMRPQFRYTLIS) the chain is on the cytoplasmic side. The chain crosses the membrane as a helical span at residues 213–230 (VRAVIISAVAANIVFRVI). Topologically, residues 231–250 (NGQDAVITMPQYDAPELSTL) are periplasmic. A helical transmembrane segment spans residues 251 to 279 (GLFLLLGALFGVFGVLFNYLITLAQDLFV). At 280 to 285 (KFHRND) the chain is on the cytoplasmic side. Residues 286–307 (RKRYLLTGSMIGGCFGLLLLYV) form a helical membrane-spanning segment. Topologically, residues 308-327 (PELTGGGISLIPTITNGGYG) are periplasmic. Transmembrane regions (helical) follow at residues 328 to 347 (AGILLLLFVGRIFTTLLCFG) and 353 to 374 (GIFAPMLALGTLFGYAFGLIAK). Positions 353 to 357 (GIFAP) match the Selectivity filter part_3 motif. Residues Ile-354 and Phe-355 each coordinate chloride. The Periplasmic portion of the chain corresponds to 375-384 (MWFPELNIEP). An intramembrane region (helical) is located at residues 385 to 399 (GMFAIAGMGALFAAT). Positions 400–402 (VRA) form an intramembrane region, note=Loop between two helices. An intramembrane region (helical) is located at residues 403–414 (PITGILLVIEMT). The segment at residues 415–419 (NNYHL) is an intramembrane region (note=Loop between two helices). A helical membrane pass occupies residues 420–436 (ILPLIITSLGAVIFAQL). Topologically, residues 437–468 (LGGQPIYSQLLHRTLKNQKLQQQDLPPQSPNS) are cytoplasmic. Tyr-443 is a chloride binding site.

The protein belongs to the chloride channel (TC 2.A.49) family. ClcA subfamily. Homodimer.

The protein resides in the cell inner membrane. The enzyme catalyses 2 chloride(in) + H(+)(out) = 2 chloride(out) + H(+)(in). Functionally, proton-coupled chloride transporter. Functions as antiport system and exchanges two chloride ions for 1 proton. Probably acts as an electrical shunt for an outwardly-directed proton pump that is linked to amino acid decarboxylation, as part of the extreme acid resistance (XAR) response. This is H(+)/Cl(-) exchange transporter ClcA from Vibrio cholerae serotype O1 (strain ATCC 39315 / El Tor Inaba N16961).